We begin with the raw amino-acid sequence, 243 residues long: Adenosylcobinamide-GDP ribazoletransferase (243 aa).

6 helical membrane passes run 33-53, 59-79, 105-125, 127-147, 172-192, and 223-243; these read FLPV…LLAP, IIIV…HIDG, IGAF…TLAY, TENM…VFAA, VISI…GAII, and TIEI…SIII.

It belongs to the CobS family. The cofactor is Mg(2+).

Its subcellular location is the cell membrane. It carries out the reaction alpha-ribazole + adenosylcob(III)inamide-GDP = adenosylcob(III)alamin + GMP + H(+). The enzyme catalyses alpha-ribazole 5'-phosphate + adenosylcob(III)inamide-GDP = adenosylcob(III)alamin 5'-phosphate + GMP + H(+). Its pathway is cofactor biosynthesis; adenosylcobalamin biosynthesis; adenosylcobalamin from cob(II)yrinate a,c-diamide: step 7/7. Joins adenosylcobinamide-GDP and alpha-ribazole to generate adenosylcobalamin (Ado-cobalamin). Also synthesizes adenosylcobalamin 5'-phosphate from adenosylcobinamide-GDP and alpha-ribazole 5'-phosphate. This is Adenosylcobinamide-GDP ribazoletransferase from Alkaliphilus oremlandii (strain OhILAs) (Clostridium oremlandii (strain OhILAs)).